We begin with the raw amino-acid sequence, 831 residues long: Multiphosphoryl transfer protein 1 (831 aa).

The HPr domain maps to 1–90 (MLTIQFLCPL…EYIQVRFIDS (90 aa)). Histidine 15 (pros-phosphohistidine intermediate; for HPr activity) is an active-site residue. Position 15 is a phosphohistidine; by EI (histidine 15). Positions 119–650 (GNVLASGVGV…AVKSQLRQLD (532 aa)) are PTS EI. Catalysis depends on histidine 298, which acts as the Tele-phosphohistidine intermediate; for PTS EI activity. The residue at position 298 (histidine 298) is a Phosphohistidine; by autocatalysis. Residues arginine 405 and arginine 441 each contribute to the phosphoenolpyruvate site. 2 residues coordinate Mg(2+): glutamate 540 and aspartate 564. Phosphoenolpyruvate contacts are provided by residues 563-564 (ND) and arginine 574. The Proton donor; for EI activity role is filled by cysteine 611. One can recognise a PTS EIIA type-2 domain in the interval 685–828 (PLLALENIFV…QSILTLLETE (144 aa)). Catalysis depends on histidine 747, which acts as the Tele-phosphohistidine intermediate; for PTS EIIA activity. Histidine 747 is modified (phosphohistidine; by HPr).

This sequence belongs to the PEP-utilizing enzyme family. It depends on Mg(2+) as a cofactor.

It localises to the cytoplasm. It carries out the reaction L-histidyl-[protein] + phosphoenolpyruvate = N(pros)-phospho-L-histidyl-[protein] + pyruvate. The catalysed reaction is D-fructose(out) + N(pros)-phospho-L-histidyl-[protein] = D-fructose 1-phosphate(in) + L-histidyl-[protein]. Multifunctional protein that includes general (non sugar-specific) and sugar-specific components of the phosphoenolpyruvate-dependent sugar phosphotransferase system (sugar PTS). This major carbohydrate active transport system catalyzes the phosphorylation of incoming sugar substrates concomitantly with their translocation across the cell membrane. The enzyme II FryABC PTS system is involved in fructose transport. In Escherichia coli (strain K12), this protein is Multiphosphoryl transfer protein 1 (fryA).